Reading from the N-terminus, the 473-residue chain is Aspartyl/glutamyl-tRNA(Asn/Gln) amidotransferase subunit B (473 aa).

The protein belongs to the GatB/GatE family. GatB subfamily. Heterotrimer of A, B and C subunits.

The enzyme catalyses L-glutamyl-tRNA(Gln) + L-glutamine + ATP + H2O = L-glutaminyl-tRNA(Gln) + L-glutamate + ADP + phosphate + H(+). The catalysed reaction is L-aspartyl-tRNA(Asn) + L-glutamine + ATP + H2O = L-asparaginyl-tRNA(Asn) + L-glutamate + ADP + phosphate + 2 H(+). Allows the formation of correctly charged Asn-tRNA(Asn) or Gln-tRNA(Gln) through the transamidation of misacylated Asp-tRNA(Asn) or Glu-tRNA(Gln) in organisms which lack either or both of asparaginyl-tRNA or glutaminyl-tRNA synthetases. The reaction takes place in the presence of glutamine and ATP through an activated phospho-Asp-tRNA(Asn) or phospho-Glu-tRNA(Gln). The protein is Aspartyl/glutamyl-tRNA(Asn/Gln) amidotransferase subunit B of Wolbachia pipientis subsp. Culex pipiens (strain wPip).